The primary structure comprises 355 residues: G protein alpha i subunit (355 aa).

G2 is lipidated: N-myristoyl glycine. The S-palmitoyl cysteine moiety is linked to residue C3. One can recognise a G-alpha domain in the interval S33–F355. Residues K36–T49 form a G1 motif region. GTP is bound by residues G41–S48, L176–T182, D201–Q205, N270–D273, and A327. Mg(2+) is bound by residues S48 and T182. Residues D174–T182 form a G2 motif region. A G3 motif region spans residues F197 to R206. Positions I266 to D273 are G4 motif. The G5 motif stretch occupies residues T325–T330.

Belongs to the G-alpha family. G(i/o/t/z) subfamily. In terms of assembly, g proteins are composed of 3 units; alpha, beta and gamma. The alpha chain contains the guanine nucleotide binding site. Interacts (via GDP- or GTP-bound forms) with loco (via GoLoco and RGS domains). Interacts with raps/pins.

It is found in the cell membrane. It localises to the apical cell membrane. Its function is as follows. Guanine nucleotide-binding proteins (G proteins) are involved as modulators or transducers in various transmembrane signaling systems. Plays a role in glial cell differentiation during embryogenesis; loco, Galphao and the G-protein coupled receptor, moody, are required in the surface glia to achieve effective insulation of the nerve cord. This is G protein alpha i subunit (Galphai) from Drosophila melanogaster (Fruit fly).